Here is a 325-residue protein sequence, read N- to C-terminus: 4-diphosphocytidyl-2-C-methyl-D-erythritol kinase (325 aa).

Lys22 is an active-site residue. 110-120 is an ATP binding site; it reads PVAGGMAGGSA. Asp152 is an active-site residue. The interval 306–325 is disordered; sequence PAPGARVLEAVSTPSPGGRS.

This sequence belongs to the GHMP kinase family. IspE subfamily.

The catalysed reaction is 4-CDP-2-C-methyl-D-erythritol + ATP = 4-CDP-2-C-methyl-D-erythritol 2-phosphate + ADP + H(+). It functions in the pathway isoprenoid biosynthesis; isopentenyl diphosphate biosynthesis via DXP pathway; isopentenyl diphosphate from 1-deoxy-D-xylulose 5-phosphate: step 3/6. Catalyzes the phosphorylation of the position 2 hydroxy group of 4-diphosphocytidyl-2C-methyl-D-erythritol. This Kineococcus radiotolerans (strain ATCC BAA-149 / DSM 14245 / SRS30216) protein is 4-diphosphocytidyl-2-C-methyl-D-erythritol kinase.